A 250-amino-acid chain; its full sequence is 3-deoxy-manno-octulosonate cytidylyltransferase (250 aa).

Belongs to the KdsB family.

It is found in the cytoplasm. It catalyses the reaction 3-deoxy-alpha-D-manno-oct-2-ulosonate + CTP = CMP-3-deoxy-beta-D-manno-octulosonate + diphosphate. It participates in nucleotide-sugar biosynthesis; CMP-3-deoxy-D-manno-octulosonate biosynthesis; CMP-3-deoxy-D-manno-octulosonate from 3-deoxy-D-manno-octulosonate and CTP: step 1/1. Its pathway is bacterial outer membrane biogenesis; lipopolysaccharide biosynthesis. Its function is as follows. Activates KDO (a required 8-carbon sugar) for incorporation into bacterial lipopolysaccharide in Gram-negative bacteria. In Geobacter sulfurreducens (strain ATCC 51573 / DSM 12127 / PCA), this protein is 3-deoxy-manno-octulosonate cytidylyltransferase.